Reading from the N-terminus, the 237-residue chain is Orotidine 5'-phosphate decarboxylase (237 aa).

Residues Asp-10, Lys-33, 60–69, Thr-124, Arg-186, Gln-195, Gly-215, and Arg-216 each bind substrate; that span reads DLKLHDIPNT. Lys-62 acts as the Proton donor in catalysis.

This sequence belongs to the OMP decarboxylase family. Type 1 subfamily. As to quaternary structure, homodimer.

It carries out the reaction orotidine 5'-phosphate + H(+) = UMP + CO2. It functions in the pathway pyrimidine metabolism; UMP biosynthesis via de novo pathway; UMP from orotate: step 2/2. In terms of biological role, catalyzes the decarboxylation of orotidine 5'-monophosphate (OMP) to uridine 5'-monophosphate (UMP). In Lactiplantibacillus plantarum (strain ATCC BAA-793 / NCIMB 8826 / WCFS1) (Lactobacillus plantarum), this protein is Orotidine 5'-phosphate decarboxylase.